The following is a 193-amino-acid chain: Potassium-transporting ATPase KdpC subunit (193 aa).

A helical transmembrane segment spans residues 7–27; that stretch reads PLVVIFVVLTAVTGLAYPAVM.

Belongs to the KdpC family. In terms of assembly, the system is composed of three essential subunits: KdpA, KdpB and KdpC.

Its subcellular location is the cell inner membrane. Functionally, part of the high-affinity ATP-driven potassium transport (or Kdp) system, which catalyzes the hydrolysis of ATP coupled with the electrogenic transport of potassium into the cytoplasm. This subunit acts as a catalytic chaperone that increases the ATP-binding affinity of the ATP-hydrolyzing subunit KdpB by the formation of a transient KdpB/KdpC/ATP ternary complex. This is Potassium-transporting ATPase KdpC subunit from Burkholderia ambifaria (strain ATCC BAA-244 / DSM 16087 / CCUG 44356 / LMG 19182 / AMMD) (Burkholderia cepacia (strain AMMD)).